Reading from the N-terminus, the 539-residue chain is Probable glycerol kinase (539 aa).

T12 is a binding site for substrate. ATP is bound at residue R16. Substrate-binding residues include R86, Y168, and D285. ATP is bound by residues T307, G352, and 453–457; that span reads GMAKN.

Belongs to the FGGY kinase family.

It carries out the reaction glycerol + ATP = sn-glycerol 3-phosphate + ADP + H(+). It participates in polyol metabolism; glycerol degradation via glycerol kinase pathway; sn-glycerol 3-phosphate from glycerol: step 1/1. The sequence is that of Probable glycerol kinase (gk) from Dictyostelium discoideum (Social amoeba).